Here is a 270-residue protein sequence, read N- to C-terminus: NAD kinase (270 aa).

The active-site Proton acceptor is the Asp-45. NAD(+) is bound by residues 45 to 46 (DG), 121 to 122 (NE), Lys-147, Asp-149, 160 to 165 (TAYSKS), and Ala-184.

The protein belongs to the NAD kinase family. The cofactor is a divalent metal cation.

It is found in the cytoplasm. The catalysed reaction is NAD(+) + ATP = ADP + NADP(+) + H(+). Involved in the regulation of the intracellular balance of NAD and NADP, and is a key enzyme in the biosynthesis of NADP. Catalyzes specifically the phosphorylation on 2'-hydroxyl of the adenosine moiety of NAD to yield NADP. The chain is NAD kinase from Lactobacillus johnsonii (strain CNCM I-12250 / La1 / NCC 533).